Consider the following 953-residue polypeptide: Zinc finger protein 507 (953 aa).

The residue at position 95 (Ser95) is a Phosphoserine. 3 C2H2-type zinc fingers span residues 125 to 147, 155 to 185, and 248 to 270; these read YQCSLCKFLSSSFSVLKDHIKQH, LMCSECHITSRSQEELEAHVVNDHDNDANIH, and YRCLFCSYTCGQQRMLKTHAWKH. Ser427 carries the phosphoserine modification. The tract at residues 470-489 is disordered; sequence KGLATDENAPPGRRRTNSES. 5 consecutive C2H2-type zinc fingers follow at residues 641-663, 669-691, 697-720, 758-780, and 786-808; these read YRCRLCHYTSGNKGYIKQHLRVH, YQCPICEHIADNSKDLESHMIHH, YQCKQCEESFHYKSQLRNHEREQH, YRCDVCDYTSTTYVGVRNHRRIH, and YRCSLCGYVCSHPPSLKSHMWKH. A disordered region spans residues 831–888; that stretch reads GRVLGKSPGKTQLKSSEESADPVTGSSENAVSSSELMSQTPSEVLGTNENEKLSPTSN. Residues 854–888 show a composition bias toward polar residues; it reads TGSSENAVSSSELMSQTPSEVLGTNENEKLSPTSN. The C2H2-type 9 zinc finger occupies 911-933; that stretch reads FCCCICGFESTSKENLLDHMKEH.

Belongs to the krueppel C2H2-type zinc-finger protein family.

The protein localises to the nucleus. Functionally, may be involved in transcriptional regulation. The chain is Zinc finger protein 507 (ZNF507) from Homo sapiens (Human).